A 129-amino-acid polypeptide reads, in one-letter code: NADPH-dependent 7-cyano-7-deazaguanine reductase (129 aa).

Catalysis depends on cysteine 43, which acts as the Thioimide intermediate. Catalysis depends on aspartate 50, which acts as the Proton donor. Substrate is bound by residues valine 65 to leucine 67 and histidine 84 to glutamate 85.

Belongs to the GTP cyclohydrolase I family. QueF type 1 subfamily.

The protein localises to the cytoplasm. The catalysed reaction is 7-aminomethyl-7-carbaguanine + 2 NADP(+) = 7-cyano-7-deazaguanine + 2 NADPH + 3 H(+). It functions in the pathway tRNA modification; tRNA-queuosine biosynthesis. Functionally, catalyzes the NADPH-dependent reduction of 7-cyano-7-deazaguanine (preQ0) to 7-aminomethyl-7-deazaguanine (preQ1). The sequence is that of NADPH-dependent 7-cyano-7-deazaguanine reductase from Aquifex aeolicus (strain VF5).